The sequence spans 364 residues: Zinc finger protein CONSTANS-LIKE 12 (364 aa).

Positions 5, 8, 28, and 33 each coordinate Zn(2+). The segment at 5–47 (CDHCATSQALIYCKSDLAKLCLNCDVHVHSANPLSHRHIRSLI) adopts a B box-type 1; atypical zinc-finger fold. The B box-type 2; degenerate zinc-finger motif lies at 48-88 (CEKCFSQPAAIRCLDEKVSYCQGCHWHESNCSELGHRVQSL). Residues 280 to 322 (QDCGMSPGFIMSEAPWETNFEVSCPQARNEAKLRYKEKKLKRS) enclose the CCT domain.

It belongs to the CONSTANS family.

It is found in the nucleus. The chain is Zinc finger protein CONSTANS-LIKE 12 (COL12) from Arabidopsis thaliana (Mouse-ear cress).